The sequence spans 491 residues: 3-octaprenyl-4-hydroxybenzoate carboxy-lyase (491 aa).

A Mn(2+)-binding site is contributed by asparagine 172. Prenylated FMN contacts are provided by residues 175–177 (IYR), 189–191 (RWL), and 194–195 (RG). Glutamate 238 is a Mn(2+) binding site. Residue aspartate 287 is the Proton donor of the active site.

It belongs to the UbiD family. In terms of assembly, homohexamer. It depends on prenylated FMN as a cofactor. Mn(2+) is required as a cofactor.

It is found in the cell membrane. It catalyses the reaction a 4-hydroxy-3-(all-trans-polyprenyl)benzoate + H(+) = a 2-(all-trans-polyprenyl)phenol + CO2. It functions in the pathway cofactor biosynthesis; ubiquinone biosynthesis. In terms of biological role, catalyzes the decarboxylation of 3-octaprenyl-4-hydroxy benzoate to 2-octaprenylphenol, an intermediate step in ubiquinone biosynthesis. In Histophilus somni (strain 129Pt) (Haemophilus somnus), this protein is 3-octaprenyl-4-hydroxybenzoate carboxy-lyase.